Consider the following 427-residue polypeptide: 3-phosphoshikimate 1-carboxyvinyltransferase (427 aa).

Lys-20, Ser-21, and Arg-25 together coordinate 3-phosphoshikimate. Residue Lys-20 participates in phosphoenolpyruvate binding. The phosphoenolpyruvate site is built by Gly-92 and Arg-120. 4 residues coordinate 3-phosphoshikimate: Ser-166, Gln-168, Asp-312, and Lys-339. Gln-168 provides a ligand contact to phosphoenolpyruvate. Catalysis depends on Asp-312, which acts as the Proton acceptor. Phosphoenolpyruvate-binding residues include Arg-343 and Arg-385.

This sequence belongs to the EPSP synthase family. In terms of assembly, monomer.

The protein resides in the cytoplasm. The catalysed reaction is 3-phosphoshikimate + phosphoenolpyruvate = 5-O-(1-carboxyvinyl)-3-phosphoshikimate + phosphate. It functions in the pathway metabolic intermediate biosynthesis; chorismate biosynthesis; chorismate from D-erythrose 4-phosphate and phosphoenolpyruvate: step 6/7. In terms of biological role, catalyzes the transfer of the enolpyruvyl moiety of phosphoenolpyruvate (PEP) to the 5-hydroxyl of shikimate-3-phosphate (S3P) to produce enolpyruvyl shikimate-3-phosphate and inorganic phosphate. The protein is 3-phosphoshikimate 1-carboxyvinyltransferase of Streptococcus sanguinis (strain SK36).